Here is a 95-residue protein sequence, read N- to C-terminus: MSITAEKKQELIKKFALHENDTGSPEVQIAVLTERIRNLTEHIKANKKDLHSRRGLIGMVNKRRKLLNYLKRESEERYRKIIEALNIRETSNESK.

This sequence belongs to the universal ribosomal protein uS15 family. As to quaternary structure, part of the 30S ribosomal subunit. Forms a bridge to the 50S subunit in the 70S ribosome, contacting the 23S rRNA.

Functionally, one of the primary rRNA binding proteins, it binds directly to 16S rRNA where it helps nucleate assembly of the platform of the 30S subunit by binding and bridging several RNA helices of the 16S rRNA. Forms an intersubunit bridge (bridge B4) with the 23S rRNA of the 50S subunit in the ribosome. The polypeptide is Small ribosomal subunit protein uS15 (Sulfurihydrogenibium sp. (strain YO3AOP1)).